The chain runs to 359 residues: Peptide chain release factor 1 (359 aa).

Position 234 is an N5-methylglutamine (Gln-234). The tract at residues Ser-283–Arg-305 is disordered.

The protein belongs to the prokaryotic/mitochondrial release factor family. Methylated by PrmC. Methylation increases the termination efficiency of RF1.

It localises to the cytoplasm. Its function is as follows. Peptide chain release factor 1 directs the termination of translation in response to the peptide chain termination codons UAG and UAA. The chain is Peptide chain release factor 1 from Methylobacterium nodulans (strain LMG 21967 / CNCM I-2342 / ORS 2060).